A 293-amino-acid chain; its full sequence is tRNA (guanine(9)-N1)-methyltransferase (293 aa).

The disordered stretch occupies residues 1 to 31 (MSNDEINQNEEKVKRTPPLPPVPEGMSKKQW). Position 16 is a phosphothreonine (Thr-16). A coiled-coil region spans residues 32–61 (KKMCKRQRWEENKAKYNAERRVKKKRLRHE). The SAM-dependent MTase TRM10-type domain occupies 83–279 (EPRINVNQTD…SVLPPRKLDA (197 aa)). S-adenosyl-L-methionine-binding positions include 186–187 (LT), Gly-206, 210–214 (DKNRY), Cys-218, Leu-232, and 244–246 (RVL). The active-site Proton acceptor is Asp-210. Phosphoserine is present on Ser-283.

The protein belongs to the class IV-like SAM-binding methyltransferase superfamily. TRM10 family. As to quaternary structure, monomer.

It localises to the cytoplasm. Its subcellular location is the nucleus. The enzyme catalyses guanosine(9) in tRNA + S-adenosyl-L-methionine = N(1)-methylguanosine(9) in tRNA + S-adenosyl-L-homocysteine + H(+). In terms of biological role, S-adenosyl-L-methionine-dependent guanine N(1)-methyltransferase that catalyzes the formation of N(1)-methylguanine at position 9 (m1G9) in cytoplasmic tRNAs. This Saccharomyces cerevisiae (strain ATCC 204508 / S288c) (Baker's yeast) protein is tRNA (guanine(9)-N1)-methyltransferase.